The primary structure comprises 635 residues: Replication factor C small subunit (635 aa).

51–58 (GPPGTGKT) serves as a coordination point for ATP.

This sequence belongs to the activator 1 small subunits family. RfcS subfamily. In terms of assembly, heteromultimer composed of small subunits (RfcS) and large subunits (RfcL). In terms of processing, this protein undergoes a protein self splicing that involves a post-translational excision of the intervening region (intein) followed by peptide ligation.

Functionally, part of the RFC clamp loader complex which loads the PCNA sliding clamp onto DNA. In Methanopyrus kandleri (strain AV19 / DSM 6324 / JCM 9639 / NBRC 100938), this protein is Replication factor C small subunit (rfcS).